The sequence spans 152 residues: Small integral membrane protein 28 (152 aa).

The chain crosses the membrane as a helical span at residues 52–72; that stretch reads FLCILLPATILLFLAFLLLFL. The tract at residues 117–152 is disordered; that stretch reads PLPPEATLPSQCLPPSYEEATRNPPGEEAQGCSPSV.

It localises to the membrane. This is Small integral membrane protein 28 from Homo sapiens (Human).